A 102-amino-acid chain; its full sequence is NADH-quinone oxidoreductase subunit K 1 (102 aa).

3 consecutive transmembrane segments (helical) span residues 5–25 (LLHV…CVLV), 30–50 (IIMM…AFVG), and 62–82 (VFAL…LALV).

This sequence belongs to the complex I subunit 4L family. NDH-1 is composed of 14 different subunits. Subunits NuoA, H, J, K, L, M, N constitute the membrane sector of the complex.

Its subcellular location is the cell inner membrane. It catalyses the reaction a quinone + NADH + 5 H(+)(in) = a quinol + NAD(+) + 4 H(+)(out). NDH-1 shuttles electrons from NADH, via FMN and iron-sulfur (Fe-S) centers, to quinones in the respiratory chain. The immediate electron acceptor for the enzyme in this species is believed to be ubiquinone. Couples the redox reaction to proton translocation (for every two electrons transferred, four hydrogen ions are translocated across the cytoplasmic membrane), and thus conserves the redox energy in a proton gradient. The sequence is that of NADH-quinone oxidoreductase subunit K 1 from Geotalea uraniireducens (strain Rf4) (Geobacter uraniireducens).